A 533-amino-acid polypeptide reads, in one-letter code: Probable fucosyltransferase 5 (533 aa).

At 1–13 the chain is on the cytoplasmic side; the sequence is MYQKFQISGKIVK. Residues 14-34 traverse the membrane as a helical; Signal-anchor for type II membrane protein segment; it reads TLGLKMKVLIAVSFGSLLFIL. The Lumenal portion of the chain corresponds to 35–533; the sequence is SYSNNFNNKL…YGGLKLYDEF (499 aa). N-linked (GlcNAc...) asparagine glycosylation is found at Asn202, Asn227, Asn374, Asn396, and Asn475.

The protein belongs to the glycosyltransferase 37 family. Expressed in roots, leaves, flowers and siliques.

It is found in the golgi apparatus. Its subcellular location is the golgi stack membrane. Its pathway is protein modification; protein glycosylation. Its function is as follows. May be involved in cell wall biosynthesis. May act as a fucosyltransferase. This is Probable fucosyltransferase 5 (FUT5) from Arabidopsis thaliana (Mouse-ear cress).